The following is a 1008-amino-acid chain: Translation initiation factor IF-2 (1008 aa).

Disordered stretches follow at residues 113–136 (AVTA…KGNV), 153–235 (DKDS…PAAP), and 253–405 (GLTV…YRKD). Composition is skewed to basic and acidic residues over residues 153–180 (DKDS…KAKP) and 189–213 (PKPE…KAET). 2 stretches are compositionally biased toward low complexity: residues 294-329 (GPNK…PRPQ) and 342-358 (GGPN…SNGP). Basic and acidic residues predominate over residues 365–381 (ASEKGEVTGKQIQDKIK). The 171-residue stretch at 507–677 (DRAPIVTIMG…LLEAEMLELK (171 aa)) folds into the tr-type G domain. The tract at residues 516-523 (GHVDHGKT) is G1. 516–523 (GHVDHGKT) contacts GTP. The segment at 541–545 (GITQH) is G2. A G3 region spans residues 563–566 (DTPG). GTP-binding positions include 563–567 (DTPGH) and 617–620 (NKID). The G4 stretch occupies residues 617-620 (NKID). Positions 653–655 (SAK) are G5.

Belongs to the TRAFAC class translation factor GTPase superfamily. Classic translation factor GTPase family. IF-2 subfamily.

The protein resides in the cytoplasm. Functionally, one of the essential components for the initiation of protein synthesis. Protects formylmethionyl-tRNA from spontaneous hydrolysis and promotes its binding to the 30S ribosomal subunits. Also involved in the hydrolysis of GTP during the formation of the 70S ribosomal complex. The protein is Translation initiation factor IF-2 of Cytophaga hutchinsonii (strain ATCC 33406 / DSM 1761 / CIP 103989 / NBRC 15051 / NCIMB 9469 / D465).